We begin with the raw amino-acid sequence, 510 residues long: Putative glycerol-3-phosphate transporter 3 (510 aa).

12 consecutive transmembrane segments (helical) span residues 31–51 (LSFKQYQAMVFVLTFIAYIAF), 91–111 (ALLGQIDLAFLSVYAVGMFVA), 123–143 (FLTIGMVGTGVCTALFGVAFW), 158–178 (LAGWFQSIGWPCVVAVLGNWF), 185–205 (VIMGVWSAHTSLGNIIGTLIA), 217–237 (FVGPALLITFLGIVVYLFLPV), 279–299 (VGFLAAWKIPGVAPFAFCLFF), 331–351 (GNLSTLFDVGGVVGGILAGYF), 355–375 (LDGRAITAGGFIYLTIPALFL), 378–398 (IYGHVSMTINIILMFVAGLFV), 436–456 (TGSVGAAIGPVLTGYIAAISW), and 459–479 (VFYMLMTAALISGLLLTTLII).

This sequence belongs to the major facilitator superfamily. Organophosphate:Pi antiporter (OPA) (TC 2.A.1.4) family.

It is found in the membrane. The polypeptide is Putative glycerol-3-phosphate transporter 3 (Arabidopsis thaliana (Mouse-ear cress)).